Here is a 484-residue protein sequence, read N- to C-terminus: uncharacterized protein (484 aa).

The helical transmembrane segment at 25-45 (PLSLFVVLAAVPLPIYFSGLL) threads the bilayer. Residues 384-419 (LSFEETKELWVRADLDGNGVFDYEELKKIWNMTMVN) enclose the EF-hand domain. The Ca(2+) site is built by aspartate 397, aspartate 399, asparagine 401, and glutamate 408.

Its subcellular location is the membrane. This is an uncharacterized protein from Arabidopsis thaliana (Mouse-ear cress).